Consider the following 462-residue polypeptide: N-myc proto-oncogene protein (462 aa).

The interval 19–47 is interaction with AURKA; that stretch reads LEFDSLQPCFYPDEDDFYFGGPDSTPPGE. Residues 61 to 90 form an interaction with AURKA and FBXW7 region; it reads LSPSRAFPEHSPEPSNWATEMLLPEADLWG. Positions 76-85 match the 9aaTAD motif; the sequence is NWATEMLLPE. Disordered regions lie at residues 133–177, 232–290, and 332–390; these read EKLQ…ATLP, AAPA…SNNK, and APSP…LERQ. Low complexity predominate over residues 138 to 174; it reads GHGPPGASSSCPAPGVGASSSGGRALGGSASAGRTGA. The segment covering 257–276 has biased composition (acidic residues); that stretch reads TLSDSDDEDDEEEDEEEEID. Phosphoserine; by CK2 occurs at positions 259 and 261. A bHLH domain is found at 379–431; it reads ERRRNHNILERQRRNDLRSSFLTLRDHVPELVKNEKAAKVVILKKATEYVHAL. Positions 431–452 are leucine-zipper; it reads LQANEHQLLLEKEKLQARQQQL.

Efficient DNA binding requires dimerization with another bHLH protein. Binds DNA as a heterodimer with MAX. Interacts with KDM5A, KDM5B and HUWE1. Interacts with MYCNOS. Interacts with AURKA; interaction is phospho-independent and triggers AURKA activation; AURKA competes with FBXW7 for binding to unphosphorylated MYCN but not for binding to unphosphorylated MYCN. Interacts with FBXW7; FBXW7 competes with AURKA for binding to unphosphorylated MYCN but not for binding to phosphorylated MYCN. In terms of processing, phosphorylated by GSK3-beta which may promote its degradation. Phosphorylated by AURKA.

The protein resides in the nucleus. Its function is as follows. Positively regulates the transcription of MYCNOS in neuroblastoma cells. The chain is N-myc proto-oncogene protein (Mycn) from Rattus norvegicus (Rat).